The chain runs to 252 residues: Imidazole glycerol phosphate synthase subunit HisF (252 aa).

Catalysis depends on residues aspartate 11 and aspartate 130.

The protein belongs to the HisA/HisF family. In terms of assembly, heterodimer of HisH and HisF.

It localises to the cytoplasm. The enzyme catalyses 5-[(5-phospho-1-deoxy-D-ribulos-1-ylimino)methylamino]-1-(5-phospho-beta-D-ribosyl)imidazole-4-carboxamide + L-glutamine = D-erythro-1-(imidazol-4-yl)glycerol 3-phosphate + 5-amino-1-(5-phospho-beta-D-ribosyl)imidazole-4-carboxamide + L-glutamate + H(+). It functions in the pathway amino-acid biosynthesis; L-histidine biosynthesis; L-histidine from 5-phospho-alpha-D-ribose 1-diphosphate: step 5/9. Functionally, IGPS catalyzes the conversion of PRFAR and glutamine to IGP, AICAR and glutamate. The HisF subunit catalyzes the cyclization activity that produces IGP and AICAR from PRFAR using the ammonia provided by the HisH subunit. The chain is Imidazole glycerol phosphate synthase subunit HisF from Moorella thermoacetica (strain ATCC 39073 / JCM 9320).